The primary structure comprises 928 residues: Isoleucine--tRNA ligase (928 aa).

The 'HIGH' region motif lies at 57–67; it reads PFANGNIHMGH. Residue E552 coordinates L-isoleucyl-5'-AMP. Residues 593 to 597 carry the 'KMSKS' region motif; that stretch reads KMSKS. K596 contacts ATP. C887, C890, C907, and C910 together coordinate Zn(2+).

This sequence belongs to the class-I aminoacyl-tRNA synthetase family. IleS type 1 subfamily. In terms of assembly, monomer. The cofactor is Zn(2+).

The protein resides in the cytoplasm. It carries out the reaction tRNA(Ile) + L-isoleucine + ATP = L-isoleucyl-tRNA(Ile) + AMP + diphosphate. Functionally, catalyzes the attachment of isoleucine to tRNA(Ile). As IleRS can inadvertently accommodate and process structurally similar amino acids such as valine, to avoid such errors it has two additional distinct tRNA(Ile)-dependent editing activities. One activity is designated as 'pretransfer' editing and involves the hydrolysis of activated Val-AMP. The other activity is designated 'posttransfer' editing and involves deacylation of mischarged Val-tRNA(Ile). This is Isoleucine--tRNA ligase from Lacticaseibacillus casei (strain BL23) (Lactobacillus casei).